A 186-amino-acid polypeptide reads, in one-letter code: Temperature-induced lipocalin-1 (186 aa).

An HPR (Hydrophobic proline-rich) motif is present at residues 90-97 (PPFLPIIP). The segment at 154–174 (KLHKTPQSDTPPESNTAPEDS) is disordered. Residues 158-171 (TPQSDTPPESNTAP) are compositionally biased toward polar residues.

It belongs to the calycin superfamily. Lipocalin family. In terms of tissue distribution, expressed ubiquitously at similar levels, except in dry seeds (at protein level). Present in seeds.

The protein localises to the cell membrane. It localises to the cytoplasm. The protein resides in the plastid. Its subcellular location is the chloroplast membrane. Involved in basal (BT) and acquired thermotolerance (AT), probably by preventing plasma membrane lipids peroxidation induced by severe heat-shock (HS). Lipocalin that confers protection against oxidative stress caused by heat, freezing, paraquat and light. Confers resistance to high salt (NaCl) levels, probably by protecting chloroplasts from ion toxicity via ion homeostasis maintenance. Required for seed longevity by ensuring polyunsaturated lipids integrity. This Arabidopsis thaliana (Mouse-ear cress) protein is Temperature-induced lipocalin-1.